The sequence spans 132 residues: uncharacterized protein (132 aa).

Transmembrane regions (helical) follow at residues Phe-19–Leu-39, Ile-58–Met-78, and Leu-93–Leu-113.

Belongs to the bacteriophage holin family. Cp-1 holin subfamily.

It localises to the cell membrane. This is an uncharacterized protein from Clostridium perfringens.